Consider the following 305-residue polypeptide: UDP-N-acetylenolpyruvoylglucosamine reductase (305 aa).

An FAD-binding PCMH-type domain is found at 22 to 190 (KVGGAADFFA…LSARFRLQAG (169 aa)). The active site involves Arg169. Catalysis depends on Ser220, which acts as the Proton donor. Residue Glu290 is part of the active site.

This sequence belongs to the MurB family. Requires FAD as cofactor.

The protein localises to the cytoplasm. The catalysed reaction is UDP-N-acetyl-alpha-D-muramate + NADP(+) = UDP-N-acetyl-3-O-(1-carboxyvinyl)-alpha-D-glucosamine + NADPH + H(+). The protein operates within cell wall biogenesis; peptidoglycan biosynthesis. Functionally, cell wall formation. This chain is UDP-N-acetylenolpyruvoylglucosamine reductase, found in Synechococcus sp. (strain RCC307).